The following is a 229-amino-acid chain: Cytochrome c oxidase subunit 2 (229 aa).

The Mitochondrial intermembrane segment spans residues 1–26 (MATWAQLNFQDAASPMMEQLHYFHDH). Residues 27–48 (TMMVLVIITIMVAYIMGTMFFN) traverse the membrane as a helical segment. Over 49–62 (KDVNRYLLDGQKIE) the chain is Mitochondrial matrix. The helical transmembrane segment at 63-82 (TEWTIVPVFVLVIIAMPSLR) threads the bilayer. The Mitochondrial intermembrane portion of the chain corresponds to 83-229 (LLYLLDEVNE…INWIQNMSEA (147 aa)). Positions 161, 196, 198, 200, 204, and 207 each coordinate Cu cation. Glu198 is a Mg(2+) binding site.

The protein belongs to the cytochrome c oxidase subunit 2 family. Component of the cytochrome c oxidase (complex IV, CIV), a multisubunit enzyme composed of a catalytic core of 3 subunits and several supernumerary subunits. The complex exists as a monomer or a dimer and forms supercomplexes (SCs) in the inner mitochondrial membrane with ubiquinol-cytochrome c oxidoreductase (cytochrome b-c1 complex, complex III, CIII). It depends on Cu cation as a cofactor.

Its subcellular location is the mitochondrion inner membrane. The catalysed reaction is 4 Fe(II)-[cytochrome c] + O2 + 8 H(+)(in) = 4 Fe(III)-[cytochrome c] + 2 H2O + 4 H(+)(out). Its function is as follows. Component of the cytochrome c oxidase, the last enzyme in the mitochondrial electron transport chain which drives oxidative phosphorylation. The respiratory chain contains 3 multisubunit complexes succinate dehydrogenase (complex II, CII), ubiquinol-cytochrome c oxidoreductase (cytochrome b-c1 complex, complex III, CIII) and cytochrome c oxidase (complex IV, CIV), that cooperate to transfer electrons derived from NADH and succinate to molecular oxygen, creating an electrochemical gradient over the inner membrane that drives transmembrane transport and the ATP synthase. Cytochrome c oxidase is the component of the respiratory chain that catalyzes the reduction of oxygen to water. Electrons originating from reduced cytochrome c in the intermembrane space (IMS) are transferred via the dinuclear copper A center (CU(A)) of subunit 2 and heme A of subunit 1 to the active site in subunit 1, a binuclear center (BNC) formed by heme A3 and copper B (CU(B)). The BNC reduces molecular oxygen to 2 water molecules using 4 electrons from cytochrome c in the IMS and 4 protons from the mitochondrial matrix. The sequence is that of Cytochrome c oxidase subunit 2 (COII) from Sympetrum striolatum (Common darter dragonfly).